The primary structure comprises 129 residues: Small ribosomal subunit protein uS11 (129 aa).

The protein belongs to the universal ribosomal protein uS11 family. As to quaternary structure, part of the 30S ribosomal subunit. Interacts with proteins S7 and S18. Binds to IF-3.

Functionally, located on the platform of the 30S subunit, it bridges several disparate RNA helices of the 16S rRNA. Forms part of the Shine-Dalgarno cleft in the 70S ribosome. This is Small ribosomal subunit protein uS11 from Rhodopseudomonas palustris (strain BisB5).